Here is a 111-residue protein sequence, read N- to C-terminus: uncharacterized protein (111 aa).

The next 2 membrane-spanning stretches (helical) occupy residues 27-47 and 80-100; these read IIVL…GYKF and IFTG…ISAI.

It localises to the membrane. This is an uncharacterized protein from Acanthamoeba polyphaga (Amoeba).